The sequence spans 301 residues: Ribosomal protein L11 methyltransferase (301 aa).

Residues T146, G167, D189, and N237 each contribute to the S-adenosyl-L-methionine site.

Belongs to the methyltransferase superfamily. PrmA family.

The protein localises to the cytoplasm. The enzyme catalyses L-lysyl-[protein] + 3 S-adenosyl-L-methionine = N(6),N(6),N(6)-trimethyl-L-lysyl-[protein] + 3 S-adenosyl-L-homocysteine + 3 H(+). In terms of biological role, methylates ribosomal protein L11. In Prochlorococcus marinus (strain MIT 9303), this protein is Ribosomal protein L11 methyltransferase.